Reading from the N-terminus, the 326-residue chain is MKRLNTVLKEDGVQTDLILLIRTILATSKEIAFRVSQGELAGVLGSTLNENIQGEVQKKLDVIANQLLKDILLDDNSVRTVASEEEDHAVGANPEGKFIVAFDPLDGSSNIDVNGQIGTIFTIYLARDDVPYDSDEQFNQLGANQVCAGYVLYGPSSLLVMSTGGPTRCYTLDSTHGGYLLTNNQLSVPEQSSEFAVNMANYRYWDEPTQVYFDKLLYTCKSFDKSSVRWNAAMVGDVHRILCRGGLFLYPQDNRAGNENGKIRLLYEANPLALLVENAGGKATSKGARILDIAPTNLHQRVPVVLGSIAPAEYFNSTVYNSNAKY.

Residues glutamate 84, aspartate 103, leucine 105, and aspartate 106 each coordinate Mg(2+). Residues 106 to 109 (DGSS), asparagine 198, and lysine 262 each bind substrate. Glutamate 268 is a Mg(2+) binding site.

It belongs to the FBPase class 1 family. Homotetramer. The cofactor is Mg(2+).

The protein localises to the cytoplasm. It carries out the reaction beta-D-fructose 1,6-bisphosphate + H2O = beta-D-fructose 6-phosphate + phosphate. The protein operates within carbohydrate biosynthesis; gluconeogenesis. The sequence is that of Fructose-1,6-bisphosphatase class 1 2 from Pseudoalteromonas translucida (strain TAC 125).